A 124-amino-acid polypeptide reads, in one-letter code: Fluoride-specific ion channel FluC (124 aa).

The next 4 helical transmembrane spans lie at 5-25 (VYIALLGALGCLCRYFLSGFV), 32-52 (SFPYGTLAVNLIGAFLIGLIM), 67-87 (FAITIGFLGGLTTFSTFSFET), and 96-116 (LLIAIVNVLVSVVACLTCTWI). Residues glycine 75 and threonine 78 each coordinate Na(+).

It belongs to the fluoride channel Fluc/FEX (TC 1.A.43) family.

It localises to the cell inner membrane. It catalyses the reaction fluoride(in) = fluoride(out). Na(+) is not transported, but it plays an essential structural role and its presence is essential for fluoride channel function. In terms of biological role, fluoride-specific ion channel. Important for reducing fluoride concentration in the cell, thus reducing its toxicity. This chain is Fluoride-specific ion channel FluC, found in Citrifermentans bemidjiense (strain ATCC BAA-1014 / DSM 16622 / JCM 12645 / Bem) (Geobacter bemidjiensis).